We begin with the raw amino-acid sequence, 200 residues long: dITP/XTP pyrophosphatase (200 aa).

7–12 lines the substrate pocket; that stretch reads TSNKHK. Mg(2+)-binding residues include E38 and D73. The active-site Proton acceptor is the D73. Substrate-binding positions include S74, 154–157, K177, and 182–183; these read FGYD and HR.

This sequence belongs to the HAM1 NTPase family. As to quaternary structure, homodimer. It depends on Mg(2+) as a cofactor.

The catalysed reaction is XTP + H2O = XMP + diphosphate + H(+). It catalyses the reaction dITP + H2O = dIMP + diphosphate + H(+). It carries out the reaction ITP + H2O = IMP + diphosphate + H(+). In terms of biological role, pyrophosphatase that catalyzes the hydrolysis of nucleoside triphosphates to their monophosphate derivatives, with a high preference for the non-canonical purine nucleotides XTP (xanthosine triphosphate), dITP (deoxyinosine triphosphate) and ITP. Seems to function as a house-cleaning enzyme that removes non-canonical purine nucleotides from the nucleotide pool, thus preventing their incorporation into DNA/RNA and avoiding chromosomal lesions. The protein is dITP/XTP pyrophosphatase of Campylobacter jejuni subsp. jejuni serotype O:6 (strain 81116 / NCTC 11828).